Consider the following 695-residue polypeptide: Translation initiation factor IF-2 (695 aa).

The segment at 60-92 (KKSASSKKKTEKEVEEEEIETPKKKKKQEEKIP) is disordered. Residues 184-358 (QRPPVVTVMG…EMSEIKCIPT (175 aa)) enclose the tr-type G domain. Residues 193–200 (GHVDHGKT) form a G1 region. A GTP-binding site is contributed by 193-200 (GHVDHGKT). The segment at 218–222 (GITQS) is G2. Residues 239–242 (DTPG) are G3. Residues 239–243 (DTPGH) and 293–296 (NKID) each bind GTP. The segment at 293–296 (NKID) is G4. Positions 330–332 (SAK) are G5.

The protein belongs to the TRAFAC class translation factor GTPase superfamily. Classic translation factor GTPase family. IF-2 subfamily.

The protein resides in the cytoplasm. Its function is as follows. One of the essential components for the initiation of protein synthesis. Protects formylmethionyl-tRNA from spontaneous hydrolysis and promotes its binding to the 30S ribosomal subunits. Also involved in the hydrolysis of GTP during the formation of the 70S ribosomal complex. This Kosmotoga olearia (strain ATCC BAA-1733 / DSM 21960 / TBF 19.5.1) protein is Translation initiation factor IF-2.